The following is a 467-amino-acid chain: Mothers against decapentaplegic homolog 2 (467 aa).

At Ser2 the chain carries N-acetylserine. The residue at position 8 (Thr8) is a Phosphothreonine. Residues 10–176 (PVVKRLLGWK…YQRVETPVLP (167 aa)) form the MH1 domain. Lys19 bears the N6-acetyllysine mark. Zn(2+)-binding residues include Cys74, Cys149, Cys161, and His166. Residues 207–217 (PAGIEPQSNYI) are compositionally biased toward polar residues. The interval 207–251 (PAGIEPQSNYIPETPPPGYISEDGETSDQQLNQSMDTGSPAELSP) is disordered. Position 220 is a phosphothreonine (Thr220). The PY-motif signature appears at 221-225 (PPPGY). Residues 233-243 (SDQQLNQSMDT) show a composition bias toward polar residues. Ser240 bears the Phosphoserine; by CAMK2 mark. A phosphoserine mark is found at Ser245, Ser250, Ser255, Ser458, Ser460, and Ser464. The 194-residue stretch at 274 to 467 (WCSIAYYELN…SPSVRCSSMS (194 aa)) folds into the MH2 domain. Ser465 and Ser467 each carry phosphoserine; by TGFBR1.

Belongs to the dwarfin/SMAD family. As to quaternary structure, monomer; in the absence of TGF-beta. Heterodimer; in the presence of TGF-beta. Forms a heterodimer with co-SMAD, SMAD4, in the nucleus to form the transactivation complex SMAD2/SMAD4. Found in a complex with SMAD3 and TRIM33 upon addition of TGF-beta. Identified in a complex that contains at least ZNF451, SMAD2, SMAD3 and SMAD4. Interacts (via the MH2 domain) with ZFYVE9; may form trimers with the SMAD4 co-SMAD. Interacts with TAZ/WWRT1. Interacts with FOXH1. Interacts with SNW1. Interacts with CREB-binding protein (CBP) and EP300. Interacts with SNON. Interacts with ALK4/ACVR1B. Interacts with SKOR1. Interacts with SKOR2. Interacts with PRDM16. Interacts (via MH2 domain) with LEMD3. Interacts with RBPMS. Interacts with WWP1. Interacts (dephosphorylated form, via the MH1 and MH2 domains) with RANBP3 (via its C-terminal R domain); the interaction results in the export of dephosphorylated SMAD3 out of the nucleus and termination of the TGF-beta signaling. Interacts with PDPK1 (via PH domain). Interacts with DAB2; the interactions are enhanced upon TGF-beta stimulation. Interacts with USP15. Interacts with PPP5C. Interacts with LDLRAD4 (via the SMAD interaction motif). Interacts (via MH2 domain) with PMEPA1 (via the SMAD interaction motif). Interacts with ZFHX3. Interacts with ZNF451. Interacts with SMURF2 when phosphorylated on Ser-465/467. Interacts with PPM1A. Interacts with TGF-beta. Interacts with TGFBR1. Interacts with TGIF. Interacts with SMAD3 and TRIM33. Interacts with ZNF580. Interacts with NEDD4L in response to TGF-beta. Interacts with HGS. Interacts with AIP1. Interacts with WWP1. Interacts with PML. Interacts weakly with ZNF8. Interacts (when phosphorylated) with RNF111; RNF111 acts as an enhancer of the transcriptional responses by mediating ubiquitination and degradation of SMAD2 inhibitors. Interacts with YAP1 (when phosphorylated at 'Ser-55'). Interacts when phosphorylated with IPO7; the interaction facilitates translocation of SMAD2 to the nucleus. Interacts with MTMR4; negatively regulates TGF-beta signaling through SMAD2 dephosphorylation and retention in endosomes. In terms of processing, in response to TGF-beta, phosphorylated on the C-terminal SXS motif by TGF-beta and activin type 1 receptor kinases, phosphorylation declines progressively in a KMT5A-dependent manner. Phosphorylation in this motif is required for interaction with a number of proteins including SMURF2, SNON and SMAD4 in response to TGF-beta. Dephosphorylated in this motif by PPM1A leading to disruption of the SMAD2/3-SMAD4 complex, nuclear export and termination of the TGF-beta signaling. In response to decorin, the naturally occurring inhibitor of TGF-beta signaling, phosphorylated on Ser-240 by CaMK2. Phosphorylated by MAPK3 upon EGF stimulation; which increases transcriptional activity and stability, and is blocked by calmodulin. Phosphorylated by PDPK1. Post-translationally, acetylated on Lys-19 by coactivators in response to TGF-beta signaling, which increases transcriptional activity. In response to TGF-beta, ubiquitinated by NEDD4L; which promotes its degradation. Monoubiquitinated, leading to prevent DNA-binding. Deubiquitination by USP15 alleviates inhibition and promotes activation of TGF-beta target genes. Ubiquitinated by RNF111, leading to its degradation: only SMAD2 proteins that are 'in use' are targeted by RNF111, RNF111 playing a key role in activating SMAD2 and regulating its turnover.

The protein localises to the cytoplasm. The protein resides in the nucleus. Receptor-regulated SMAD (R-SMAD) that is an intracellular signal transducer and transcriptional modulator activated by TGF-beta (transforming growth factor) and activin type 1 receptor kinases. Binds the TRE element in the promoter region of many genes that are regulated by TGF-beta and, on formation of the SMAD2/SMAD4 complex, activates transcription. Promotes TGFB1-mediated transcription of odontoblastic differentiation genes in dental papilla cells. Positively regulates PDPK1 kinase activity by stimulating its dissociation from the 14-3-3 protein YWHAQ which acts as a negative regulator. The protein is Mothers against decapentaplegic homolog 2 (SMAD2) of Pongo abelii (Sumatran orangutan).